The following is a 693-amino-acid chain: TGF-beta-activated kinase 1 and MAP3K7-binding protein 2 (693 aa).

Residues Ile-8–Thr-51 enclose the CUE domain. A disordered region spans residues Gly-91–Pro-130. The segment covering Met-97–Pro-130 has biased composition (polar residues). Arg-173 is modified (asymmetric dimethylarginine). Residues Ile-219–Ser-310 form a disordered region. The segment covering Thr-220–Gln-231 has biased composition (low complexity). The span at His-232 to His-282 shows a compositional bias: polar residues. Residues Pro-286–Ser-310 are compositionally biased toward low complexity. Lys-329 participates in a covalent cross-link: Glycyl lysine isopeptide (Lys-Gly) (interchain with G-Cter in SUMO). The tract at residues Leu-330–Ser-381 is disordered. The segment covering Ser-343–Thr-359 has biased composition (low complexity). Residues Ser-372, Ser-450, Ser-482, and Ser-524 each carry the phosphoserine modification. Residues Tyr-532–Arg-619 are a coiled coil. A Glycyl lysine isopeptide (Lys-Gly) (interchain with G-Cter in SUMO) cross-link involves residue Lys-562. A Phosphoserine modification is found at Ser-582. Lys-611 is covalently cross-linked (Glycyl lysine isopeptide (Lys-Gly) (interchain with G-Cter in ubiquitin)). The segment at Pro-642 to Asp-663 is disordered. The RanBP2-type zinc-finger motif lies at Asp-663–Phe-693. The residue at position 673 (Cys-673) is a (Microbial infection) S-methylcysteine. The interval Phe-675 to Glu-685 is interaction with polyubiquitin.

Interacts with MAP3K7 and TRAF6. Identified in the TRIKA2 complex composed of MAP3K7, TAB1 and TAB2. Binds 'Lys-63'-linked polyubiquitin chains. Interacts with NCOR1 and HDAC3 to form a ternary complex. Interacts (via C-terminal) with NUMBL (via PTB domain). Interacts (via the C-terminus) with DYNC2I2 (via WD domains). Interacts with RBCK1. Interacts with TRIM5. Interacts with TRIM38 (via B30.2/SPRY domain), leading to its translocation to lysosomes and degradation. Interacts with ASB1; this interaction promotes TAB2 stability. Post-translationally, degraded in a lysosome-dependent manner following interaction with TRIM38. In terms of processing, SUMOylated by TRIM60; leading to inhibition of MAPK/NF-kappaB activation and the innate immune response. Ubiquitinated; following IL1 stimulation or TRAF6 overexpression. Ubiquitination involves RBCK1 leading to proteasomal degradation. Ubiquitinated at Lys-611 by TRIM45 leading to proteasomal degradation. Post-translationally, phosphorylated. In terms of processing, (Microbial infection) Methylated at Cys-673 by enteropathogenic E.coli protein NleE or S.flexneri protein OspZ: methylation disrupts zinc-binding and ability to bind 'Lys-63'-linked ubiquitin, leading to NF-kappa-B inactivation. Widely expressed. In the embryo, expressed in the ventricular trabeculae, endothelial cells of the conotruncal cushions of the outflow tract and in the endothelial cells lining the developing aortic valves.

Its subcellular location is the membrane. It localises to the endosome membrane. It is found in the lysosome membrane. The protein resides in the cytoplasm. The protein localises to the cytosol. Adapter required to activate the JNK and NF-kappa-B signaling pathways through the specific recognition of 'Lys-63'-linked polyubiquitin chains by its RanBP2-type zinc finger (NZF). Acts as an adapter linking MAP3K7/TAK1 and TRAF6 to 'Lys-63'-linked polyubiquitin chains. The RanBP2-type zinc finger (NZF) specifically recognizes Lys-63'-linked polyubiquitin chains unanchored or anchored to the substrate proteins such as RIPK1/RIP1 and RIPK2: this acts as a scaffold to organize a large signaling complex to promote autophosphorylation of MAP3K7/TAK1, and subsequent activation of I-kappa-B-kinase (IKK) core complex by MAP3K7/TAK1. Also recognizes and binds Lys-63'-linked polyubiquitin chains of heterotypic 'Lys-63'-/'Lys-48'-linked branched ubiquitin chains. Regulates the IL1-mediated translocation of NCOR1 out of the nucleus. Involved in heart development. The protein is TGF-beta-activated kinase 1 and MAP3K7-binding protein 2 of Homo sapiens (Human).